We begin with the raw amino-acid sequence, 103 residues long: Putative sulfurtransferase YtwF (103 aa).

Positions 17 to 100 constitute a Rhodanese domain; that stretch reads ADEELYLIDV…GMMAWEGETK (84 aa). The active-site Cysteine persulfide intermediate is C65.

The sequence is that of Putative sulfurtransferase YtwF (ytwF) from Bacillus subtilis (strain 168).